The primary structure comprises 966 residues: MVNSRRVQPQPPGDAGRSPAPRASGPGRLVAGGAGLAVPGGLGEQRGLEIEMERIRQAAARDPPAGASASPSPPLSSCSRQAWSRDNPGFEAEEDDDDDEVEGEEGGMVVEMDVEWRPGSRRSASSSAVSSVGARGRGLGSYRGAAHLSGRRRRLEDQGAQCPSPAGGGDPLHRHLPLEGQPPRVAWAERLVRGLRGLWGTRLMEESNANREKYLKSVLRELVTYLFFLVVLCILTYGMMSSNVYYYTRTLSQLFIDTPVSKTEKTNFKTLSSMEDFWKFTEGSFLDGLYWKAQTSNHTQADNRSFIFYENLLLGVPRLRQLRVRNGSCSIPQDLRDEIKECYDVYSVSSEDRAPFGPRNGTAWMYTSEKELNGSSHWGIIASYSGAGYYLDLSRTREETAAQLAGLRRNFWLDRGTRAAFIDFSVYNANINLFCVVRLLAEFPATGGVVPSWQFQPVKLIRYVTAFDFFLAACEIIFCFFIIYYVVEEILEIRIHRLSYFRSFWNCLDVVIVVLSVVAMVINIYRMSNAEGLLQFLEDQNSFPNFEHVAYWQIQFNNISAVMVFLVWIKLFKFINFNRTMSQLSTTMSRCAKDLFGFTIMFSIIFLAYAQLAYLVFGTQVDDFSTFQECIFTQFRIILGDINFAEIEEANRVLGPLYFTTFVFFMFFILLNMFLAIINDSYSEVKSDLAQQKAEMELSDLIRKGCQKALVKLKLKRNTVDAISESLRQGGGKLNFDELRQDLKGKGHTDAEIEAIFTKYDQDGDQELTEREHQQMRDDLEKEREDLDLEHSSLPRPMSSRSFPRSLDDSEEEDDEDSGHSSRRRGSISSGVSYEEFQVLVRRVDRMEHSIGSIVSKIDAVIVKLEIMERAKLKRREVLGRLLDGVAEDARLGRDSEIHREQMERLVREELERWESDDAASQTGHGVSTQVGLGGQPHPRNPRPPSSQSAEGLEGGGGNGSANVHA.

A disordered region spans residues 1–106; it reads MVNSRRVQPQ…DDDEVEGEEG (106 aa). The Cytoplasmic portion of the chain corresponds to 1 to 217; the sequence is MVNSRRVQPQ…NANREKYLKS (217 aa). A compositionally biased stretch (gly residues) spans 30–44; it reads VAGGAGLAVPGGLGE. The segment covering 46–56 has biased composition (basic and acidic residues); it reads RGLEIEMERIR. Over residues 58–79 the composition is skewed to low complexity; the sequence is AAARDPPAGASASPSPPLSSCS. 2 positions are modified to phosphoserine: Ser72 and Ser76. Positions 91-105 are enriched in acidic residues; the sequence is EAEEDDDDDEVEGEE. Arg135 bears the Omega-N-methylarginine mark. The disordered stretch occupies residues 147–179; it reads HLSGRRRRLEDQGAQCPSPAGGGDPLHRHLPLE. Residues 218 to 239 form a helical membrane-spanning segment; it reads VLRELVTYLFFLVVLCILTYGM. The Extracellular portion of the chain corresponds to 240 to 466; it reads MSSNVYYYTR…PVKLIRYVTA (227 aa). Residues Asn297, Asn303, and Asn326 are each glycosylated (N-linked (GlcNAc...) asparagine). Cys329 and Cys342 are disulfide-bonded. Asn360 and Asn373 each carry an N-linked (GlcNAc...) asparagine glycan. The chain crosses the membrane as a helical span at residues 467–487; it reads FDFFLAACEIIFCFFIIYYVV. The Cytoplasmic segment spans residues 488 to 503; the sequence is EEILEIRIHRLSYFRS. Residues 504-524 form a helical membrane-spanning segment; that stretch reads FWNCLDVVIVVLSVVAMVINI. The Extracellular segment spans residues 525–550; that stretch reads YRMSNAEGLLQFLEDQNSFPNFEHVA. A helical membrane pass occupies residues 551-571; the sequence is YWQIQFNNISAVMVFLVWIKL. Gln555 contributes to the cholesterol binding site. At 572 to 595 the chain is on the cytoplasmic side; it reads FKFINFNRTMSQLSTTMSRCAKDL. The chain crosses the membrane as a helical span at residues 596 to 617; sequence FGFTIMFSIIFLAYAQLAYLVF. Residues 618–629 lie on the Extracellular side of the membrane; sequence GTQVDDFSTFQE. Positions 630–644 form an intramembrane region, pore-forming; it reads CIFTQFRIILGDINF. Leu639 lines the Ca(2+) pocket. A Selectivity filter motif is present at residues 639–641; sequence LGD. The Extracellular portion of the chain corresponds to 645–652; that stretch reads AEIEEANR. A helical membrane pass occupies residues 653 to 673; that stretch reads VLGPLYFTTFVFFMFFILLNM. At 674–966 the chain is on the cytoplasmic side; sequence FLAIINDSYS…GGNGSANVHA (293 aa). In terms of domain architecture, EF-hand spans 748–783; the sequence is HTDAEIEAIFTKYDQDGDQELTEREHQQMRDDLEKE. Asp761, Asp763, Asp765, Glu767, and Glu772 together coordinate Ca(2+). Residues 764 to 828 are disordered; sequence GDQELTEREH…GHSSRRRGSI (65 aa). Over residues 768–793 the composition is skewed to basic and acidic residues; that stretch reads LTEREHQQMRDDLEKEREDLDLEHSS. A compositionally biased stretch (low complexity) spans 794-805; sequence LPRPMSSRSFPR. Phosphoserine occurs at positions 799, 806, 810, and 827. Residues 801–820 form a linker region; it reads RSFPRSLDDSEEEDDEDSGH. Positions 808–819 are important for interaction with PACS1 and PACS2; sequence DDSEEEDDEDSG. A coiled-coil region spans residues 831–870; sequence GVSYEEFQVLVRRVDRMEHSIGSIVSKIDAVIVKLEIMER. Residues 914–966 form a disordered region; sequence WESDDAASQTGHGVSTQVGLGGQPHPRNPRPPSSQSAEGLEGGGGNGSANVHA. Residues 919–931 are compositionally biased toward polar residues; sequence AASQTGHGVSTQV.

The protein belongs to the polycystin family. Homotetramer. Component of the heterotetrameric polycystin channel complex with PKD1; the tetramer contains one PKD1 chain and three PKD2 chains. Interaction with PKD1 is required for ciliary localization. Isoform 1 interacts with PKD1 while isoform 3 does not. Interacts with PKD1L1. Interacts with CD2AP. Interacts with HAX1. Interacts with NEK8. Part of a complex containing AKAP5, ADCY5, ADCY6 and PDE4C. Interacts (via C-terminus) with TRPV4 (via C-terminus). Interacts (via C-terminal acidic region) with PACS1 and PACS2; these interactions retain the protein in the endoplasmic reticulum and prevent trafficking to the cell membrane. Interacts with TMEM33; enhancing its opening at the ER membrane. Interacts with TMEM120A; TMEM120A inhibits PKD2 channel activity through the physical association of PKD2 with TMEM120A. Interacts (via N-terminus) with RYR2; regulates RYR2 channel activity. N-glycosylated. The four subunits in a tetramer probably differ in the extent of glycosylation; simultaneous glycosylation of all experimentally validated sites would probably create steric hindrance. Post-translationally, sumoylated by SUMO1; sumoylation regulates PKD2 membrane recycling and is necessary for intravascular pressure-induced arterial contractility. In terms of processing, phosphorylated. Phosphorylation is important for protein function; a mutant that lacks the N-terminal phosphorylation sites cannot complement a zebrafish pkd2-deficient mutant. PKD-mediated phosphorylation at the C-terminus regulates its function in the release of Ca(2+) stores from the endoplasmic reticulum. Phosphorylation at Ser-810 regulates PKD2 trafficking. Phosphorylation at Ser-72 is required for PKD2 trafficking to or retention at the lateral plasma membrane. Phosphorylation at Ser-799, Ser-810 and Ser-827 regulates PKD2 channel activity. In terms of tissue distribution, detected in kidney epithelium (at protein level). Highly expressed on basolateral membranes in distal convoluted tubules and medullary thick ascending limbs of Henle. Detected at much lower levels in cortical and medullary collecting tubules, and not detected in the glomerular tuft, in thin limbs of Henle, interstitium and blood vessels (at protein level). Expressed in mesenchymally derived structures in the developing embryo at day 12.5. Isoform 1 is predominantly expressed in kidney at all developmental stages with high levels also detected in lung. Isoform 3 shows highest expression in brain with lower expression in kidney and lung, low levels in thymus and is hardly detectable in liver.

It localises to the cell projection. The protein localises to the cilium membrane. Its subcellular location is the cell membrane. It is found in the basolateral cell membrane. The protein resides in the cytoplasmic vesicle membrane. It localises to the endoplasmic reticulum membrane. The protein localises to the golgi apparatus. Its subcellular location is the vesicle. It is found in the secreted. The protein resides in the extracellular exosome. The enzyme catalyses K(+)(in) = K(+)(out). It carries out the reaction Na(+)(in) = Na(+)(out). The catalysed reaction is Ca(2+)(in) = Ca(2+)(out). Its activity is regulated as follows. Channel activity is regulated by phosphorylation. The channel is activated by increased cytoplasmic Ca(2+) (in the uM range) and by membrane depolarization. TMEM120A inhibits the channel activity of PKD2, and mediates mechanosensitivity of the PKD2-TMEM120A channel complex. At the endoplasmic reticulum membrane (ER), TMEM33 enhances its channel activity. PKD1/ PKD2 complex on the plasma membrane is activated by PKD1 N-terminus. Functionally, forms a nonselective cation channel. Can function as a homotetrameric ion channel or can form heteromer with PKD1. Displays distinct function depending on its subcellular localization and regulation by its binding partners. Functions as a cation channel, with a preference for monovalent cations over divalent cations that allows K(+), Na(+) and Ca(2+) influx, with low selectivity for Ca(2+). Involved in fluid-flow mechanosensation by the primary cilium in renal epithelium. In the endoplasmic reticulum, likely functions as a K(+) channel to facilitate Ca(2+) release. The heterotetrameric PKD1/PKD2 channel has higher Ca(2+) permeability than homomeric PKD2 channel and acts as a primarily Ca(2+)-permeable channel. PKD1 and PKD2 may function through a common signaling pathway that is necessary to maintain the normal, differentiated state of renal tubule cells. Interacts with and acts as a regulator of a number of other channels, such as TRPV4, TRPC1, IP3R, RYR2, ultimately further affecting intracellular signaling, to modulate intracellular Ca(2+) signaling. Together with TRPV4, forms mechano- and thermosensitive channels in cilium. In cardiomyocytes, PKD2 modulates Ca(2+) release from stimulated RYR2 receptors through direct association. Also involved in left-right axis specification via its role in sensing nodal flow; forms a complex with PKD1L1 in cilia to facilitate flow detection in left-right patterning. Acts as a regulator of cilium length together with PKD1. Mediates systemic blood pressure and contributes to the myogenic response in cerebral arteries though vasoconstriction. This chain is Polycystin-2, found in Mus musculus (Mouse).